We begin with the raw amino-acid sequence, 519 residues long: Putative ATP-dependent RNA helicase L396 (519 aa).

The Helicase ATP-binding domain occupies 110 to 258; sequence IKGMEEGGGG…IINWYMGPIL (149 aa). 123-130 contributes to the ATP binding site; sequence MGCGSGKT. Positions 211–214 match the DEAH box motif; the sequence is DEVH. Residues 317–457 form the Helicase C-terminal domain; sequence YLIQELFDMG…KQKYNIQKYY (141 aa).

It belongs to the DEAD box helicase family. DEAH subfamily.

The enzyme catalyses ATP + H2O = ADP + phosphate + H(+). This is Putative ATP-dependent RNA helicase L396 from Acanthamoeba polyphaga (Amoeba).